We begin with the raw amino-acid sequence, 101 residues long: Small ribosomal subunit protein uS14 (101 aa).

Over residues 1 to 11 (MAKKSAIETNE) the composition is skewed to basic and acidic residues. A disordered region spans residues 1–24 (MAKKSAIETNERRRKLSQSKAAKR). A compositionally biased stretch (basic residues) spans 12–24 (RRRKLSQSKAAKR).

It belongs to the universal ribosomal protein uS14 family. In terms of assembly, part of the 30S ribosomal subunit. Contacts proteins S3 and S10.

Its function is as follows. Binds 16S rRNA, required for the assembly of 30S particles and may also be responsible for determining the conformation of the 16S rRNA at the A site. This chain is Small ribosomal subunit protein uS14, found in Azorhizobium caulinodans (strain ATCC 43989 / DSM 5975 / JCM 20966 / LMG 6465 / NBRC 14845 / NCIMB 13405 / ORS 571).